The sequence spans 811 residues: Elongation factor G, mitochondrial (811 aa).

Residues 1–64 (MSAIARAAAR…FQQSFQRRWA (64 aa)) constitute a mitochondrion transit peptide. Residues 96-394 (RRQRNVGISA…GVCAYLPNPS (299 aa)) form the tr-type G domain. GTP-binding positions include 105–112 (AHIDSGKT), 192–196 (DTPGH), and 246–249 (NKMD).

This sequence belongs to the TRAFAC class translation factor GTPase superfamily. Classic translation factor GTPase family. EF-G/EF-2 subfamily.

The protein localises to the mitochondrion. The protein operates within protein biosynthesis; polypeptide chain elongation. Mitochondrial GTPase that catalyzes the GTP-dependent ribosomal translocation step during translation elongation. During this step, the ribosome changes from the pre-translocational (PRE) to the post-translocational (POST) state as the newly formed A-site-bound peptidyl-tRNA and P-site-bound deacylated tRNA move to the P and E sites, respectively. Catalyzes the coordinated movement of the two tRNA molecules, the mRNA and conformational changes in the ribosome. The protein is Elongation factor G, mitochondrial of Cryptococcus neoformans var. neoformans serotype D (strain B-3501A) (Filobasidiella neoformans).